The chain runs to 476 residues: Bifunctional protein HldE (476 aa).

A ribokinase region spans residues 1–319; it reads MKPTLPNYDQ…EAIHGSQDSG (319 aa). 195 to 198 contacts ATP; the sequence is NMLE. Aspartate 264 is a catalytic residue. A cytidylyltransferase region spans residues 344–476; the sequence is MTNGCFDILH…IIEAIKGGRG (133 aa).

The protein in the N-terminal section; belongs to the carbohydrate kinase PfkB family. This sequence in the C-terminal section; belongs to the cytidylyltransferase family. Homodimer.

It catalyses the reaction D-glycero-beta-D-manno-heptose 7-phosphate + ATP = D-glycero-beta-D-manno-heptose 1,7-bisphosphate + ADP + H(+). It carries out the reaction D-glycero-beta-D-manno-heptose 1-phosphate + ATP + H(+) = ADP-D-glycero-beta-D-manno-heptose + diphosphate. The protein operates within nucleotide-sugar biosynthesis; ADP-L-glycero-beta-D-manno-heptose biosynthesis; ADP-L-glycero-beta-D-manno-heptose from D-glycero-beta-D-manno-heptose 7-phosphate: step 1/4. It functions in the pathway nucleotide-sugar biosynthesis; ADP-L-glycero-beta-D-manno-heptose biosynthesis; ADP-L-glycero-beta-D-manno-heptose from D-glycero-beta-D-manno-heptose 7-phosphate: step 3/4. Its function is as follows. Catalyzes the phosphorylation of D-glycero-D-manno-heptose 7-phosphate at the C-1 position to selectively form D-glycero-beta-D-manno-heptose-1,7-bisphosphate. In terms of biological role, catalyzes the ADP transfer from ATP to D-glycero-beta-D-manno-heptose 1-phosphate, yielding ADP-D-glycero-beta-D-manno-heptose. In Aliivibrio fischeri (strain ATCC 700601 / ES114) (Vibrio fischeri), this protein is Bifunctional protein HldE.